The sequence spans 428 residues: Putative F-box protein At3g22421 (428 aa).

One can recognise an F-box domain in the interval 4–50 (TTTISHLPTELLDEIISRVPLKSTRAVRLTCKNWDSLFKNRSFMKEE).

The sequence is that of Putative F-box protein At3g22421 from Arabidopsis thaliana (Mouse-ear cress).